Reading from the N-terminus, the 612-residue chain is Chloride intracellular channel protein 6 (612 aa).

The segment at 1–373 (MAEATEPKEV…NGPASEEGDL (373 aa)) is disordered. Over residues 34–51 (LEGREASEGAAEAPRDLG) the composition is skewed to basic and acidic residues. A Phosphoserine modification is found at serine 40. Residues 84 to 96 (PGTETPGTSGAPG) show a composition bias toward low complexity. A compositionally biased stretch (polar residues) spans 120-129 (QQVQGTSSGL). Over residues 140–153 (EDARREPEDPKASE) the composition is skewed to basic and acidic residues. A compositionally biased stretch (low complexity) spans 208–223 (SSPQPQDEAIEIAAAE). Composition is skewed to basic and acidic residues over residues 240–264 (AKGEGETLRKDGFEEAAPEEARVDS) and 275–303 (EEARVDSGENRDQGRLQEETGEEEARPES). A phosphoserine mark is found at serine 264, serine 303, and serine 321. 2 stretches are compositionally biased toward basic and acidic residues: residues 325-335 (EEAKSTGHEES) and 354-364 (ELGRVNGRREN). Serine 368 bears the Phosphoserine mark. Positions 395–398 (CPFS) match the G-site motif. A helical transmembrane segment spans residues 397 to 417 (FSQRLFMILWLKGVIFNVTTV). The region spanning 441–612 (DGEVKTDVNK…AYSDAAKRMK (172 aa)) is the GST C-terminal domain.

Belongs to the chloride channel CLIC family. As to quaternary structure, monomer (soluble state). Interacts with dopamine receptors DRD2, DRD3 and DRD4. Post-translationally, phosphorylated. In terms of tissue distribution, predominantly expressed in brain, pituitary and stomach. In adult brain, it is restricted to the choroid plexus, the striatal proliferative subventricular zone and the cerebellum where it colocalizes with the D(3)R in the Purkinje cells of the lobules IX and X.

It is found in the cytoplasm. The protein localises to the cell membrane. The catalysed reaction is chloride(in) = chloride(out). Channel activity is redox- and pH-regulated. Inhibited by IAA-94. In the soluble state, catalyzes glutaredoxin-like thiol disulfide exchange reactions with reduced glutathione as electron donor. Can insert into membranes and form voltage-dependent chloride-selective channels. The channel opens upon membrane depolarization at positive voltages and closes at negative membrane voltages. May play a critical role in water-secreting cells, possibly through the regulation of chloride ion transport. This chain is Chloride intracellular channel protein 6 (Clic6), found in Rattus norvegicus (Rat).